The chain runs to 753 residues: 5-methyltetrahydropteroyltriglutamate--homocysteine methyltransferase (753 aa).

5-methyltetrahydropteroyltri-L-glutamate-binding positions include 17–20 (RELK) and Lys117. Residues 431 to 433 (IGS) and Glu484 contribute to the L-homocysteine site. Residues 431–433 (IGS) and Glu484 contribute to the L-methionine site. 5-methyltetrahydropteroyltri-L-glutamate-binding positions include 515–516 (RC) and Trp561. Position 599 (Asp599) interacts with L-homocysteine. Asp599 serves as a coordination point for L-methionine. A 5-methyltetrahydropteroyltri-L-glutamate-binding site is contributed by Glu605. Zn(2+) contacts are provided by His641, Cys643, and Glu665. The active-site Proton donor is His694. Zn(2+) is bound at residue Cys726.

Belongs to the vitamin-B12 independent methionine synthase family. It depends on Zn(2+) as a cofactor.

It carries out the reaction 5-methyltetrahydropteroyltri-L-glutamate + L-homocysteine = tetrahydropteroyltri-L-glutamate + L-methionine. It functions in the pathway amino-acid biosynthesis; L-methionine biosynthesis via de novo pathway; L-methionine from L-homocysteine (MetE route): step 1/1. Catalyzes the transfer of a methyl group from 5-methyltetrahydrofolate to homocysteine resulting in methionine formation. This chain is 5-methyltetrahydropteroyltriglutamate--homocysteine methyltransferase, found in Shigella flexneri.